The following is a 538-amino-acid chain: Cytochrome P450 monooxygenase claO (538 aa).

The next 2 membrane-spanning stretches (helical) occupy residues 7–27 (IGAF…KLVG) and 222–242 (INPS…PILL). Cys475 is a heme binding site.

Belongs to the cytochrome P450 family. The cofactor is heme.

The protein localises to the membrane. It participates in secondary metabolite biosynthesis; terpenoid biosynthesis. In terms of biological role, cytochrome P450 monooxygenase; part of the gene cluster that mediates the biosynthesis of clavilactone A, a meroterpenoid that features a unique benzo-fused ten-membered carbocyclic ring unit with an alpha,beta-epoxy-gamma-lactone moiety, forming an intriguing 10/5/3 tricyclic nested skeleton. Cytochrome P450 monooxygenases claO, claP, claQ, claU, and claW are close orthologs, suggesting that a redundant function or pseudogenes are present in the cla cluster. These monoxygenases are not involved in clavilactone A biosynthesis nor in its modification. ClaR, ClaS and ClaT are sufficient to produce clavilactone A. The biosynthesis begins with the prenyltransferase claS that transfers geranyl pyrophosphate (GPP) to hydroquinone to produces geranylhydroquinone. The cytochrome P450 monooxygenase claR then catalyzes the diradical coupling reaction between the intramolecular hydroquinone and allyl moieties to form the benzo-fused ten-membered carbocyclic ring unit of wigantol. Finally the cytochrome P450 monooxygenase claT exquisitely and stereoselectively assembles the alpha,beta-epoxy-gamma-lactone moiety, producing clavilactone A via arnebinol A. The protein is Cytochrome P450 monooxygenase claO of Ampulloclitocybe clavipes (Club foot).